The sequence spans 309 residues: Porphobilinogen deaminase (309 aa).

Cysteine 240 is subject to S-(dipyrrolylmethanemethyl)cysteine.

This sequence belongs to the HMBS family. As to quaternary structure, monomer. The cofactor is dipyrromethane.

The enzyme catalyses 4 porphobilinogen + H2O = hydroxymethylbilane + 4 NH4(+). Its pathway is porphyrin-containing compound metabolism; protoporphyrin-IX biosynthesis; coproporphyrinogen-III from 5-aminolevulinate: step 2/4. In terms of biological role, tetrapolymerization of the monopyrrole PBG into the hydroxymethylbilane pre-uroporphyrinogen in several discrete steps. The polypeptide is Porphobilinogen deaminase (Lawsonia intracellularis (strain PHE/MN1-00)).